The sequence spans 210 residues: MKKFTKILSLSTLLFLAGCQSVLNEPTEVQQPGVQIPHNDAQWQQHLQQLAKIQSYSAKGQIGYISPEERFSSHFDWQYRTPANFGLELSSNLSSKSLKLHRNVRGLTISDSEGNSRSDRDMDSLMKEIIGVAFPIDQFAYWLKGQPEQDGNYIVNDKRQLSQFSYHINGEVWKASYVQYHEDRQPNLPKLIVLENGSQTLKIRVDQWAF.

A signal peptide spans 1-18 (MKKFTKILSLSTLLFLAG). The N-palmitoyl cysteine moiety is linked to residue C19. C19 carries the S-diacylglycerol cysteine lipid modification.

This sequence belongs to the LolB family. In terms of assembly, monomer.

The protein resides in the cell outer membrane. Plays a critical role in the incorporation of lipoproteins in the outer membrane after they are released by the LolA protein. In Actinobacillus pleuropneumoniae serotype 5b (strain L20), this protein is Outer-membrane lipoprotein LolB.